A 367-amino-acid chain; its full sequence is UDP-N-acetylglucosamine--N-acetylmuramyl-(pentapeptide) pyrophosphoryl-undecaprenol N-acetylglucosamine transferase (367 aa).

UDP-N-acetyl-alpha-D-glucosamine-binding positions include 15–17 (TGG), N127, R163, S191, I249, and Q294.

This sequence belongs to the glycosyltransferase 28 family. MurG subfamily.

The protein resides in the cell inner membrane. It catalyses the reaction di-trans,octa-cis-undecaprenyl diphospho-N-acetyl-alpha-D-muramoyl-L-alanyl-D-glutamyl-meso-2,6-diaminopimeloyl-D-alanyl-D-alanine + UDP-N-acetyl-alpha-D-glucosamine = di-trans,octa-cis-undecaprenyl diphospho-[N-acetyl-alpha-D-glucosaminyl-(1-&gt;4)]-N-acetyl-alpha-D-muramoyl-L-alanyl-D-glutamyl-meso-2,6-diaminopimeloyl-D-alanyl-D-alanine + UDP + H(+). The protein operates within cell wall biogenesis; peptidoglycan biosynthesis. In terms of biological role, cell wall formation. Catalyzes the transfer of a GlcNAc subunit on undecaprenyl-pyrophosphoryl-MurNAc-pentapeptide (lipid intermediate I) to form undecaprenyl-pyrophosphoryl-MurNAc-(pentapeptide)GlcNAc (lipid intermediate II). The chain is UDP-N-acetylglucosamine--N-acetylmuramyl-(pentapeptide) pyrophosphoryl-undecaprenol N-acetylglucosamine transferase from Burkholderia orbicola (strain MC0-3).